Consider the following 343-residue polypeptide: N-acetyl-gamma-glutamyl-phosphate reductase (343 aa).

Cys146 is an active-site residue.

It belongs to the NAGSA dehydrogenase family. Type 1 subfamily.

It is found in the cytoplasm. The enzyme catalyses N-acetyl-L-glutamate 5-semialdehyde + phosphate + NADP(+) = N-acetyl-L-glutamyl 5-phosphate + NADPH + H(+). Its pathway is amino-acid biosynthesis; L-arginine biosynthesis; N(2)-acetyl-L-ornithine from L-glutamate: step 3/4. Its function is as follows. Catalyzes the NADPH-dependent reduction of N-acetyl-5-glutamyl phosphate to yield N-acetyl-L-glutamate 5-semialdehyde. This is N-acetyl-gamma-glutamyl-phosphate reductase from Acidothermus cellulolyticus (strain ATCC 43068 / DSM 8971 / 11B).